The primary structure comprises 253 residues: MKITAIIPARYASTRFEGKALAQIQGKPMVQHVYERTLKASLVSEVIVATDDERIVAAVRAFGGRAEMTSRSHETGTDRLAEVAARLDSDIIVNVQGDEPLIDPAMIDEAISPLAEDSSLLMGTLKTRIKSLHDFLSPNVVKVVTDWEGYALYFSRSPLPNFRDKWNDLKDEAFSSRKLLCFKHVGLYVYRREFLLQFAQMSPTYLEMAEKLEQLRVLENGYRIKVVETDFESIGVDTPGDLDKVLERLKDRG.

It belongs to the KdsB family.

The protein resides in the cytoplasm. The enzyme catalyses 3-deoxy-alpha-D-manno-oct-2-ulosonate + CTP = CMP-3-deoxy-beta-D-manno-octulosonate + diphosphate. Its pathway is nucleotide-sugar biosynthesis; CMP-3-deoxy-D-manno-octulosonate biosynthesis; CMP-3-deoxy-D-manno-octulosonate from 3-deoxy-D-manno-octulosonate and CTP: step 1/1. The protein operates within bacterial outer membrane biogenesis; lipopolysaccharide biosynthesis. Functionally, activates KDO (a required 8-carbon sugar) for incorporation into bacterial lipopolysaccharide in Gram-negative bacteria. The sequence is that of 3-deoxy-manno-octulosonate cytidylyltransferase from Geotalea daltonii (strain DSM 22248 / JCM 15807 / FRC-32) (Geobacter daltonii).